The following is a 498-amino-acid chain: ATP synthase subunit beta, chloroplastic (498 aa).

172 to 179 (GGAGVGKT) provides a ligand contact to ATP.

This sequence belongs to the ATPase alpha/beta chains family. In terms of assembly, F-type ATPases have 2 components, CF(1) - the catalytic core - and CF(0) - the membrane proton channel. CF(1) has five subunits: alpha(3), beta(3), gamma(1), delta(1), epsilon(1). CF(0) has four main subunits: a(1), b(1), b'(1) and c(9-12).

It localises to the plastid. The protein localises to the chloroplast thylakoid membrane. It catalyses the reaction ATP + H2O + 4 H(+)(in) = ADP + phosphate + 5 H(+)(out). Functionally, produces ATP from ADP in the presence of a proton gradient across the membrane. The catalytic sites are hosted primarily by the beta subunits. The polypeptide is ATP synthase subunit beta, chloroplastic (Atropa belladonna (Belladonna)).